Here is a 464-residue protein sequence, read N- to C-terminus: Cysteine--tRNA ligase (464 aa).

C32 contacts Zn(2+). The 'HIGH' region signature appears at 34 to 44 (VTVYDDCHIGH). Zn(2+) is bound by residues C213, H238, and E242. Residues 270–274 (KMSKS) carry the 'KMSKS' region motif. K273 is a binding site for ATP.

It belongs to the class-I aminoacyl-tRNA synthetase family. As to quaternary structure, monomer. Zn(2+) is required as a cofactor.

Its subcellular location is the cytoplasm. It carries out the reaction tRNA(Cys) + L-cysteine + ATP = L-cysteinyl-tRNA(Cys) + AMP + diphosphate. The polypeptide is Cysteine--tRNA ligase (Francisella tularensis subsp. holarctica (strain LVS)).